Reading from the N-terminus, the 141-residue chain is Hemoglobin subunit alpha-D (141 aa).

The Globin domain maps to 1–141 (MLSADDKKII…VAAVLAEKYR (141 aa)). Positions 58 and 87 each coordinate heme b.

The protein belongs to the globin family. In terms of assembly, heterotetramer of two alpha-D chains and two beta chains. In terms of tissue distribution, red blood cells.

In terms of biological role, involved in oxygen transport from the lung to the various peripheral tissues. The sequence is that of Hemoglobin subunit alpha-D (HBAD) from Anser indicus (Bar-headed goose).